A 235-amino-acid polypeptide reads, in one-letter code: Urease accessory protein UreF (235 aa).

This sequence belongs to the UreF family. As to quaternary structure, ureD, UreF and UreG form a complex that acts as a GTP-hydrolysis-dependent molecular chaperone, activating the urease apoprotein by helping to assemble the nickel containing metallocenter of UreC. The UreE protein probably delivers the nickel.

It localises to the cytoplasm. Required for maturation of urease via the functional incorporation of the urease nickel metallocenter. This chain is Urease accessory protein UreF, found in Haemophilus influenzae (strain PittEE).